Consider the following 527-residue polypeptide: Peptide chain release factor 3 (527 aa).

The 269-residue stretch at 9 to 277 folds into the tr-type G domain; that stretch reads AKRRTFAIIS…AVVDWAPRPL (269 aa). Residues 18–25, 86–90, and 140–143 contribute to the GTP site; these read SHPDAGKT, DTPGH, and NKLD.

This sequence belongs to the TRAFAC class translation factor GTPase superfamily. Classic translation factor GTPase family. PrfC subfamily.

Its subcellular location is the cytoplasm. In terms of biological role, increases the formation of ribosomal termination complexes and stimulates activities of RF-1 and RF-2. It binds guanine nucleotides and has strong preference for UGA stop codons. It may interact directly with the ribosome. The stimulation of RF-1 and RF-2 is significantly reduced by GTP and GDP, but not by GMP. The sequence is that of Peptide chain release factor 3 from Pseudomonas fluorescens (strain Pf0-1).